Here is a 294-residue protein sequence, read N- to C-terminus: Cuticle collagen 144 (294 aa).

A signal peptide spans 1–30; that stretch reads MEKILVTISTGAASFAVLAVLFTIPSLYNT. Residues 100 to 112 are compositionally biased toward pro residues; the sequence is TCPPGPPGPPGQP. Disordered regions lie at residues 100 to 134 and 148 to 278; these read TCPP…TYAP and PQGP…GNDA. Triple-helical region regions lie at residues 102-127 and 153-274; these read PPGP…KGED and GPEG…PGLP. Low complexity-rich tracts occupy residues 164–209 and 219–265; these read AGPD…PGQD and APGA…DGQP.

In terms of assembly, collagen polypeptide chains are complexed within the cuticle by disulfide bonds and other types of covalent cross-links.

Nematode cuticles are composed largely of collagen-like proteins. The cuticle functions both as an exoskeleton and as a barrier to protect the worm from its environment. The polypeptide is Cuticle collagen 144 (Caenorhabditis briggsae).